Here is a 64-residue protein sequence, read N- to C-terminus: Large ribosomal subunit protein bL28 (64 aa).

It belongs to the bacterial ribosomal protein bL28 family.

The chain is Large ribosomal subunit protein bL28 from Bifidobacterium adolescentis (strain ATCC 15703 / DSM 20083 / NCTC 11814 / E194a).